The following is a 361-amino-acid chain: Phenylalanine--tRNA ligase alpha subunit (361 aa).

Glu260 is a binding site for Mg(2+).

Belongs to the class-II aminoacyl-tRNA synthetase family. Phe-tRNA synthetase alpha subunit type 1 subfamily. Tetramer of two alpha and two beta subunits. It depends on Mg(2+) as a cofactor.

It is found in the cytoplasm. It carries out the reaction tRNA(Phe) + L-phenylalanine + ATP = L-phenylalanyl-tRNA(Phe) + AMP + diphosphate + H(+). The chain is Phenylalanine--tRNA ligase alpha subunit from Allorhizobium ampelinum (strain ATCC BAA-846 / DSM 112012 / S4) (Agrobacterium vitis (strain S4)).